The primary structure comprises 466 residues: Cysteine--tRNA ligase (466 aa).

Cys-28 contacts Zn(2+). A 'HIGH' region motif is present at residues 30-40 (PTVYNYIHIGN). The Zn(2+) site is built by Cys-208, His-233, and Glu-237. The 'KMSKS' region motif lies at 265 to 269 (KMSKS). Position 268 (Lys-268) interacts with ATP.

It belongs to the class-I aminoacyl-tRNA synthetase family. In terms of assembly, monomer. It depends on Zn(2+) as a cofactor.

It localises to the cytoplasm. The enzyme catalyses tRNA(Cys) + L-cysteine + ATP = L-cysteinyl-tRNA(Cys) + AMP + diphosphate. This Staphylococcus aureus (strain bovine RF122 / ET3-1) protein is Cysteine--tRNA ligase.